A 387-amino-acid chain; its full sequence is Gibberellic acid methyltransferase 2 (387 aa).

Tyr33 is an S-adenosyl-L-homocysteine binding site. Gln40 contributes to the gibberellin A4 binding site. S-adenosyl-L-homocysteine is bound by residues Cys74, Asn79, Asp113, Leu114, Ser146, and Phe147. His167 and Trp168 together coordinate gibberellin A4. Mg(2+)-binding residues include Asn185, Arg275, Asp276, Phe278, and Asn279.

Belongs to the methyltransferase superfamily. Type-7 methyltransferase family. SABATH subfamily. It depends on Mg(2+) as a cofactor. In terms of tissue distribution, expressed in siliques and germinating seeds. Not detected in leaves, stems, flowers and roots.

It carries out the reaction gibberellin A4 + S-adenosyl-L-methionine = O-methyl gibberellin A4 + S-adenosyl-L-homocysteine. With respect to regulation, down-regulated by Zn(2+), Cu(2+) and Fe(3+). No effect of K(+), NH(4+), Na(+), Ca(2+), Mg(2+), Mn(2+) and Fe(2+). Methylates the carboxyl group of several gibberellins (GAs). Substrate preference is GA4 &gt; GA34 &gt; GA9 &gt; GA3 &gt; GA1 &gt; GA51 &gt; GA20. No activity with diterpenes abietic acid and ent-kaurenoic acid. The sequence is that of Gibberellic acid methyltransferase 2 (GAMT2) from Arabidopsis thaliana (Mouse-ear cress).